The chain runs to 309 residues: Methionine synthase (309 aa).

4 residues coordinate Zn(2+): His201, Cys203, Glu224, and Cys285.

Belongs to the archaeal MetE family. The cofactor is Zn(2+).

Its pathway is amino-acid biosynthesis; L-methionine biosynthesis via de novo pathway. Is activated by phosphates. Catalyzes the transfer of a methyl group to L-homocysteine resulting in methionine formation. Can use methylcobalamin and methylcobinamide as methyl donors, but methylcobalamin is not considered to be the physiological substrate. It was proposed that, in vivo, a so-far-unidentified enzyme catalyzes methyltransfer from 5-methyltetrahydromethanopterin (5-CH3-H4MPT) to a corrinoid protein, and that the MetE gene product catalyzes the further transfer to L-homocysteine. Is not active with L-cysteine, coenzyme M, coenzyme B, glutathione or dithiothreitol as substrate. The protein is Methionine synthase of Methanothermobacter marburgensis (strain ATCC BAA-927 / DSM 2133 / JCM 14651 / NBRC 100331 / OCM 82 / Marburg) (Methanobacterium thermoautotrophicum).